The primary structure comprises 346 residues: Histidinol-phosphate aminotransferase (346 aa).

The residue at position 206 (Lys206) is an N6-(pyridoxal phosphate)lysine.

Belongs to the class-II pyridoxal-phosphate-dependent aminotransferase family. Histidinol-phosphate aminotransferase subfamily. As to quaternary structure, homodimer. Pyridoxal 5'-phosphate is required as a cofactor.

It catalyses the reaction L-histidinol phosphate + 2-oxoglutarate = 3-(imidazol-4-yl)-2-oxopropyl phosphate + L-glutamate. The protein operates within amino-acid biosynthesis; L-histidine biosynthesis; L-histidine from 5-phospho-alpha-D-ribose 1-diphosphate: step 7/9. The sequence is that of Histidinol-phosphate aminotransferase from Bacteroides thetaiotaomicron (strain ATCC 29148 / DSM 2079 / JCM 5827 / CCUG 10774 / NCTC 10582 / VPI-5482 / E50).